We begin with the raw amino-acid sequence, 446 residues long: Acyl-lipid (8-3)-desaturase (446 aa).

In terms of domain architecture, Cytochrome b5 heme-binding spans 6 to 82; the sequence is GKTFTWEELA…MKKYYVGTLV (77 aa). H41 and H64 together coordinate heme. A run of 2 helical transmembrane segments spans residues 125–145 and 150–170; these read ALIF…PFVV and LQVV…LNPL. Positions 171–175 match the Histidine box-1 motif; sequence HDASH. The Histidine box-2 signature appears at 207-212; that stretch reads HMLGHH. The short motif at 387–391 is the Histidine box-3 element; sequence QAVHH.

It belongs to the fatty acid desaturase type 1 family. Fe(2+) serves as cofactor.

Its subcellular location is the membrane. It carries out the reaction an (8Z,11Z,14Z)-icosatrienoyl-containing glycerolipid + 2 Fe(II)-[cytochrome b5] + O2 + 2 H(+) = (5Z,8Z,11Z,14Z)-eicosatetraenoyl-containing glycerolipid + 2 Fe(III)-[cytochrome b5] + 2 H2O. It catalyses the reaction an (8Z,11Z,14Z,17Z)-eicosatetraenoyl-containing glycerolipid + 2 Fe(II)-[cytochrome b5] + O2 + 2 H(+) = a (5Z,8Z,11Z,14Z,17Z)-eicosapentaenoyl-containing glycerolipid + 2 Fe(III)-[cytochrome b5] + 2 H2O. Functionally, fatty acid desaturase that introduces a cis double bond at the 5-position in 20-carbon polyunsaturated fatty acids incorporated in a glycerolipid that contain a Delta(8) double bond. Involved in the conversion of di-homo-Delta-linolenic acid to arachidonic acid. Essential in the production of eicosanoids. This Mortierella alpina (Oleaginous fungus) protein is Acyl-lipid (8-3)-desaturase (DES1).